An 816-amino-acid chain; its full sequence is MGNYSTAIDKKWQDKWAESGLYKFDPNKEGEKLYVLEMFSYPSGSQLHAGHWFNYGPVDSWARFKRMQGYNVFQPMGFDAFGLPAENFAIKTGIHPQDSTIKNIAKMEEQLKAMGAMFNWENEVVTCSPEYYKWTQWLFLKLYEKGLAYRKKAPVNWCPSCQTVLANEQVVDGACERCSTEVTKKDLTQWFFKITDYADELLDKLDGLDWPEKTVSMQKHWIGRSTGSQVNFKVKDSDLNFDVFTTRVDTLCGVSYVVLAPENPLVDEIVSAEQKEAVENYKEEAKKQSDIERQSISREKTGVFTGAYAIHPLTGKEVPIWVGDYVLATYGTGAVMAVPAHDERDFAFAEKFNLPINRVIEAKDGSETNLPFCEHGILVNSGEFDGLTTDEAKEKIVEKLSSMGLGEKKVNFRLRDWLVSRQRYWGAPIPVVYCEECGIVPVPESQLPVELPYDVEFAPDGKSPLAKSEAFVNTTCPHCGKPAKRETDTLDTFVCSSWYYLRYPDNKNTEAPFNPELINKMLPVDKYVGGPEHACMHLLYARFITKALRDMGYLNFDEPFTSLTHQGLILGPDGLKMSKSKGNTISPDDYIKEYGADVFRMYLMFGFAYTEGGAWSDDGIKSVNRFVERIERIIDTAREAISKGENNKTTMDKAEKELNYWRHNTIKSVTDDTDKLQFNTAIARMMEFINALSKYTQEKEMNLDFLKDVVSDYLRLLAPFAPHFSEEQWNLLGNSYSIFNEAWPKFDPKALVKDEVEIAIQVNGKIKNKIMVSSDLDEEGIKAAALADEKIIASTEGKTVVKVIVIKGRLVNIVVK.

A 'HIGH' region motif is present at residues 40 to 51 (SYPSGSQLHAGH). Residues 576–580 (KMSKS) carry the 'KMSKS' region motif. Residue Lys579 coordinates ATP.

This sequence belongs to the class-I aminoacyl-tRNA synthetase family.

The protein resides in the cytoplasm. The enzyme catalyses tRNA(Leu) + L-leucine + ATP = L-leucyl-tRNA(Leu) + AMP + diphosphate. This Clostridium perfringens (strain 13 / Type A) protein is Leucine--tRNA ligase.